A 73-amino-acid polypeptide reads, in one-letter code: Kappa-scoloptoxin SsmTx-I (73 aa).

The N-terminal stretch at 1–25 (MMMMFSVVSVFLMLLLLKFHDLSMG) is a signal peptide. Residues 26 to 37 (EEISLLKKVVRR) constitute a propeptide that is removed on maturation. Intrachain disulfides connect Cys45/Cys56 and Cys50/Cys63.

This sequence belongs to the scoloptoxin-04 family. As to expression, expressed by the venom gland.

Its subcellular location is the secreted. Functionally, exhibits highly specific blockage of Kv2.1/KCNB1 (IC(50)=41.7 nM) voltage-gated potassium channels. This blockage is not associated with a significant change in steady-state activation, suggesting that this toxin acts as a channel blocker rather than a gating-modifier. Shows potential analgesic activities in formalin-induced paw licking, thermal pain, and acetic acid-induced abdominal writhing mice models. The sequence is that of Kappa-scoloptoxin SsmTx-I from Scolopendra mutilans (Chinese red-headed centipede).